A 228-amino-acid polypeptide reads, in one-letter code: Triosephosphate isomerase (228 aa).

11-13 contacts substrate; that stretch reads NFK. The active-site Electrophile is the H95. Residue E143 is the Proton acceptor of the active site. Substrate is bound by residues I148, G183, and 204–205; that span reads AS.

It belongs to the triosephosphate isomerase family. Homotetramer; dimer of dimers.

It localises to the cytoplasm. The enzyme catalyses D-glyceraldehyde 3-phosphate = dihydroxyacetone phosphate. It participates in carbohydrate biosynthesis; gluconeogenesis. The protein operates within carbohydrate degradation; glycolysis; D-glyceraldehyde 3-phosphate from glycerone phosphate: step 1/1. Involved in the gluconeogenesis. Catalyzes stereospecifically the conversion of dihydroxyacetone phosphate (DHAP) to D-glyceraldehyde-3-phosphate (G3P). This is Triosephosphate isomerase from Pyrococcus abyssi (strain GE5 / Orsay).